Reading from the N-terminus, the 492-residue chain is Protein KOKOPELLI (492 aa).

Disordered stretches follow at residues 218–354 (VTSP…RNVM) and 394–426 (SKFH…QHQG). The span at 256–270 (QETETFDDDSSETEA) shows a compositional bias: acidic residues. Over residues 287 to 305 (STSQEYSGETGSSSGSEWE) the composition is skewed to low complexity. The span at 317-336 (ESSYPPQNDDSVSEVSTSPP) shows a compositional bias: polar residues. 2 stretches are compositionally biased toward basic and acidic residues: residues 337 to 348 (HTDRDTSREPGK) and 403 to 412 (KSKERKRPMS).

Mostly expressed in pollen and open flowers and, to a lower extent, in closed flowers.

Its function is as follows. Positively regulates reproductive function by facilitating male gametophyte formation and double fertilization. This Arabidopsis thaliana (Mouse-ear cress) protein is Protein KOKOPELLI.